Here is a 159-residue protein sequence, read N- to C-terminus: Ribosomal RNA large subunit methyltransferase H (159 aa).

S-adenosyl-L-methionine is bound by residues L76, G108, and 127-132 (FSNMTF).

Belongs to the RNA methyltransferase RlmH family. As to quaternary structure, homodimer.

Its subcellular location is the cytoplasm. The catalysed reaction is pseudouridine(1915) in 23S rRNA + S-adenosyl-L-methionine = N(3)-methylpseudouridine(1915) in 23S rRNA + S-adenosyl-L-homocysteine + H(+). Its function is as follows. Specifically methylates the pseudouridine at position 1915 (m3Psi1915) in 23S rRNA. The chain is Ribosomal RNA large subunit methyltransferase H from Staphylococcus epidermidis (strain ATCC 35984 / DSM 28319 / BCRC 17069 / CCUG 31568 / BM 3577 / RP62A).